Consider the following 59-residue polypeptide: Large ribosomal subunit protein bL32 (59 aa).

Basic residues predominate over residues Met-1–Arg-16. Residues Met-1 to Asp-20 form a disordered region.

Belongs to the bacterial ribosomal protein bL32 family.

The sequence is that of Large ribosomal subunit protein bL32 from Sphingopyxis alaskensis (strain DSM 13593 / LMG 18877 / RB2256) (Sphingomonas alaskensis).